A 188-amino-acid chain; its full sequence is Cytochrome c oxidase assembly protein CtaG (188 aa).

At 1–8 the chain is on the cytoplasmic side; it reads MSKKSNKN. Residues 9–31 form a helical; Signal-anchor for type II membrane protein membrane-spanning segment; it reads LAFSLLGLIISMVLLSFASVPIY. The Periplasmic segment spans residues 32–188; it reads NLFCKVTGYG…SSLRGNYVSN (157 aa).

Belongs to the COX11/CtaG family.

It localises to the cell inner membrane. Its function is as follows. Exerts its effect at some terminal stage of cytochrome c oxidase synthesis, probably by being involved in the insertion of the copper B into subunit I. In Rickettsia conorii (strain ATCC VR-613 / Malish 7), this protein is Cytochrome c oxidase assembly protein CtaG.